The chain runs to 485 residues: MSLFDHSVSELHTLLQKKEVSISDLVDESYRRIGEVEEKVQAFLTLNEEQARAKAKELDDQLAKGEETNPLFGLPIGIKDNIVTKGLRTTCAIKILYNFDPIYDATVMERLNAAGAITIGKLNMDEFAMGSSTENSGFQLTRNPWDLKRVPGGSSGGSAAAVAAGEVPFALGSDTGGSIRQPAAFCGVVGLKPTYGRVSRFGLVAFASSLDQIGPITRTVEDNAYLLQAIAGVDPMDSTSANVPVPNYVEALTGDIKGLKIAVPNEYLGEGVDEGVRQSVLAALAVLEKLGATWEEVSLPHSKYALATYYLLASSEASANLARFDGVRYGYRTDNAKNLIDMYKLTRSEGFGAEVKRRIMLGTFALSSGYYDAYYKKAQKVRTLIKRDFENVFERYDVIIGPTTPTPAFKIGEKTSDPLTMYANDILTIPVNLAGVPAISVPCGFVDGLPVGLQIIGKHFDESTVYRVAHAFEQATDYHKQKPVL.

Residues K79 and S154 each act as charge relay system in the active site. S178 (acyl-ester intermediate) is an active-site residue.

It belongs to the amidase family. GatA subfamily. In terms of assembly, heterotrimer of A, B and C subunits.

It catalyses the reaction L-glutamyl-tRNA(Gln) + L-glutamine + ATP + H2O = L-glutaminyl-tRNA(Gln) + L-glutamate + ADP + phosphate + H(+). Its function is as follows. Allows the formation of correctly charged Gln-tRNA(Gln) through the transamidation of misacylated Glu-tRNA(Gln) in organisms which lack glutaminyl-tRNA synthetase. The reaction takes place in the presence of glutamine and ATP through an activated gamma-phospho-Glu-tRNA(Gln). This is Glutamyl-tRNA(Gln) amidotransferase subunit A from Geobacillus stearothermophilus (Bacillus stearothermophilus).